A 157-amino-acid chain; its full sequence is Endoribonuclease YbeY (157 aa).

Residues His-114, His-118, and His-124 each contribute to the Zn(2+) site.

The protein belongs to the endoribonuclease YbeY family. Zn(2+) serves as cofactor.

It localises to the cytoplasm. In terms of biological role, single strand-specific metallo-endoribonuclease involved in late-stage 70S ribosome quality control and in maturation of the 3' terminus of the 16S rRNA. This is Endoribonuclease YbeY from Caulobacter vibrioides (strain ATCC 19089 / CIP 103742 / CB 15) (Caulobacter crescentus).